The chain runs to 302 residues: Tegument protein VP22 (302 aa).

Residues 1–10 (MASSDGDRLC) are compositionally biased toward basic and acidic residues. Disordered stretches follow at residues 1–42 (MASS…PDDS) and 125–170 (SFTK…SSWC). The segment at 154–244 (RPISFSTAPK…ANEADLGEGA (91 aa)) is interaction with gE. Residues 157 to 170 (SFSTAPKTATSSWC) are compositionally biased toward polar residues. Residues 212-224 (LDRLLTGAVIRIT) carry the Nuclear export signal motif. Residues 243–302 (GASVSKRGHNRKTGDLQGGMGNEPMYAQVRKPKSRTDTQTTGRITNRSRARSASRTDTRK) form a disordered region.

Belongs to the alphaherpesvirinae VP22 tegument protein family. In terms of assembly, interacts with gE (via C-terminus); this interaction is necessary for the recruitment of VP22/ORF9 to the Golgi and its packaging into virions. Interacts with gM (via C-terminus). Interacts with VP16/ORF10; this interaction allows the formation of a tripartite complex composed of VP16/ORF10, VP22/ORF9 and VHS/ORF17. Interacts with the capsid-binding protein ORF44. Interacts with host CGAS. Highly phosphorylated in the host cell. Packaging is selective for underphosphorylated forms.

It is found in the virion tegument. The protein localises to the host cytoplasm. The protein resides in the host nucleus. Its subcellular location is the host Golgi apparatus. Tegument protein that plays different roles during the time course of infection. Participates in both the accumulation of viral mRNAs and viral protein translation at late time of infection. Modulates the RNase activity of the virion host shutoff protein ORF17 probably to ensure necessary levels of key cellular mRNAs and proteins. Plays a role in microtubule reorganization that occurs after viral infection by stabilizing microtubule network. Plays a role in the inhibition of host innate immune system by targeting the CGAS enzymatic activity which is the principal cytosolic DNA sensor that detects invading viral DNA. Acts by mediating disruption of liquid-like droplets in which CGAS is activated, thereby preventing CGAS activity. This Homo sapiens (Human) protein is Tegument protein VP22.